A 290-amino-acid chain; its full sequence is Bifunctional protein FolD (290 aa).

NADP(+) is bound by residues Gly165–Ser167, Ser190, and Ile231.

The protein belongs to the tetrahydrofolate dehydrogenase/cyclohydrolase family. Homodimer.

It carries out the reaction (6R)-5,10-methylene-5,6,7,8-tetrahydrofolate + NADP(+) = (6R)-5,10-methenyltetrahydrofolate + NADPH. It catalyses the reaction (6R)-5,10-methenyltetrahydrofolate + H2O = (6R)-10-formyltetrahydrofolate + H(+). It participates in one-carbon metabolism; tetrahydrofolate interconversion. In terms of biological role, catalyzes the oxidation of 5,10-methylenetetrahydrofolate to 5,10-methenyltetrahydrofolate and then the hydrolysis of 5,10-methenyltetrahydrofolate to 10-formyltetrahydrofolate. This is Bifunctional protein FolD from Aromatoleum aromaticum (strain DSM 19018 / LMG 30748 / EbN1) (Azoarcus sp. (strain EbN1)).